Consider the following 480-residue polypeptide: Protein nucleotidyltransferase YdiU (480 aa).

The ATP site is built by G86, G88, R89, K109, D121, G122, R172, and R179. D248 functions as the Proton acceptor in the catalytic mechanism. The Mg(2+) site is built by N249 and D258. D258 contributes to the ATP binding site.

Belongs to the SELO family. Requires Mg(2+) as cofactor. Mn(2+) is required as a cofactor.

It carries out the reaction L-seryl-[protein] + ATP = 3-O-(5'-adenylyl)-L-seryl-[protein] + diphosphate. It catalyses the reaction L-threonyl-[protein] + ATP = 3-O-(5'-adenylyl)-L-threonyl-[protein] + diphosphate. The catalysed reaction is L-tyrosyl-[protein] + ATP = O-(5'-adenylyl)-L-tyrosyl-[protein] + diphosphate. The enzyme catalyses L-histidyl-[protein] + UTP = N(tele)-(5'-uridylyl)-L-histidyl-[protein] + diphosphate. It carries out the reaction L-seryl-[protein] + UTP = O-(5'-uridylyl)-L-seryl-[protein] + diphosphate. It catalyses the reaction L-tyrosyl-[protein] + UTP = O-(5'-uridylyl)-L-tyrosyl-[protein] + diphosphate. Functionally, nucleotidyltransferase involved in the post-translational modification of proteins. It can catalyze the addition of adenosine monophosphate (AMP) or uridine monophosphate (UMP) to a protein, resulting in modifications known as AMPylation and UMPylation. The sequence is that of Protein nucleotidyltransferase YdiU from Salmonella paratyphi C (strain RKS4594).